Here is a 250-residue protein sequence, read N- to C-terminus: 2,3-bisphosphoglycerate-dependent phosphoglycerate mutase (250 aa).

Substrate-binding positions include 10–17 (RHGESQWN), 23–24 (TG), Arg-62, 89–92 (ERHY), Lys-100, 116–117 (RR), and 185–186 (GN). His-11 (tele-phosphohistidine intermediate) is an active-site residue. Glu-89 acts as the Proton donor/acceptor in catalysis.

This sequence belongs to the phosphoglycerate mutase family. BPG-dependent PGAM subfamily. Homodimer.

It carries out the reaction (2R)-2-phosphoglycerate = (2R)-3-phosphoglycerate. It participates in carbohydrate degradation; glycolysis; pyruvate from D-glyceraldehyde 3-phosphate: step 3/5. Functionally, catalyzes the interconversion of 2-phosphoglycerate and 3-phosphoglycerate. The protein is 2,3-bisphosphoglycerate-dependent phosphoglycerate mutase of Salmonella agona (strain SL483).